The primary structure comprises 273 residues: Putative pyruvate, phosphate dikinase regulatory protein (273 aa).

Residue Gly-153–Thr-160 coordinates ADP.

This sequence belongs to the pyruvate, phosphate/water dikinase regulatory protein family. PDRP subfamily.

It catalyses the reaction N(tele)-phospho-L-histidyl/L-threonyl-[pyruvate, phosphate dikinase] + ADP = N(tele)-phospho-L-histidyl/O-phospho-L-threonyl-[pyruvate, phosphate dikinase] + AMP + H(+). The enzyme catalyses N(tele)-phospho-L-histidyl/O-phospho-L-threonyl-[pyruvate, phosphate dikinase] + phosphate + H(+) = N(tele)-phospho-L-histidyl/L-threonyl-[pyruvate, phosphate dikinase] + diphosphate. Its function is as follows. Bifunctional serine/threonine kinase and phosphorylase involved in the regulation of the pyruvate, phosphate dikinase (PPDK) by catalyzing its phosphorylation/dephosphorylation. The polypeptide is Putative pyruvate, phosphate dikinase regulatory protein (Sinorhizobium medicae (strain WSM419) (Ensifer medicae)).